Here is a 505-residue protein sequence, read N- to C-terminus: Lysine--tRNA ligase (505 aa).

The Mg(2+) site is built by Glu415 and Glu422.

This sequence belongs to the class-II aminoacyl-tRNA synthetase family. As to quaternary structure, homodimer. Mg(2+) is required as a cofactor.

The protein resides in the cytoplasm. It catalyses the reaction tRNA(Lys) + L-lysine + ATP = L-lysyl-tRNA(Lys) + AMP + diphosphate. The chain is Lysine--tRNA ligase from Edwardsiella ictaluri (strain 93-146).